The following is a 1241-amino-acid chain: Phosphorylase b kinase regulatory subunit alpha, skeletal muscle isoform (1241 aa).

Residues serine 629, serine 730, serine 736, serine 739, serine 759, serine 812, serine 973, serine 982, and serine 986 each carry the phosphoserine modification. The tract at residues 811-841 is calmodulin-binding; sequence LSELYVKVGEIRHWGLIRYISGILRKKVEAL. A Phosphoserine; by autocatalysis modification is found at serine 1008. Serine 1019 is subject to Phosphoserine; by PKA. A phosphoserine mark is found at serine 1021 and serine 1024. A calmodulin-binding region spans residues 1064 to 1104; sequence SKDSRQGQWQRRRRLDGALNRVPIGFYQKVWKILQKCHGLS. Serine 1131 is modified (phosphoserine). A lipid anchor (S-farnesyl cysteine) is attached at cysteine 1238.

The protein belongs to the phosphorylase b kinase regulatory chain family. As to quaternary structure, hexadecamer of 4 heterotetramers, each composed of alpha, beta, gamma, and delta subunits. Alpha (PHKA1 or PHKA2) and beta (PHKB) are regulatory subunits, gamma (PHKG1 or PHKG2) is the catalytic subunit, and delta is calmodulin. In terms of processing, although the final Cys may be farnesylated, the terminal tripeptide is probably not removed, and the C-terminus is not methylated. Both isoforms are expressed in muscle.

It is found in the cell membrane. Its pathway is glycan biosynthesis; glycogen metabolism. Its activity is regulated as follows. By phosphorylation of various serine residues and by calcium. In terms of biological role, phosphorylase b kinase catalyzes the phosphorylation of serine in certain substrates, including troponin I. The alpha chain may bind calmodulin. The sequence is that of Phosphorylase b kinase regulatory subunit alpha, skeletal muscle isoform (Phka1) from Mus musculus (Mouse).